The chain runs to 35 residues: Mu/omega-theraphotoxin-Tap1a (35 aa).

Cystine bridges form between C3–C18, C10–C23, and C17–C30.

Belongs to the neurotoxin 10 (Hwtx-1) family. 59 (Tltx) subfamily. As to expression, expressed by the venom gland.

Its subcellular location is the secreted. Functionally, gating-modifier toxin that inhibits both sodium (Nav) and calcium (Cav3) channels by inducing hyperpolarizing shift in voltage-dependence of activation and steady state inactivation. Inhibits Nav1.1/SCN1A, Nav1.2/SCN2A, Nav1.3/SCN3A, Nav1.6/SCN6A, Nav1.7/SCN9A and Cav3.1/CACNA1G sodium and calcium channels at nanomolar concentrations (IC(50)=81-301 nM). Surprisingly, selectively slows fast inactivation of Nav1.3/SCN3A. Also shows moderate inhibition of Cav3.2/CACNA1H calcium channels (IC(50)=1233 nM). Ex vivo, nearly ablates neuronal mechanosensitivity in afferent fibers innervating the colon and the bladder. In vivo, in a mouse model of irritable bowel syndrome, intracolonic administration of the toxin reverses colonic mechanical hypersensitivity. This Theraphosa apophysis (Goliath pinkfoot tarantula) protein is Mu/omega-theraphotoxin-Tap1a.